A 33-amino-acid polypeptide reads, in one-letter code: VTCFCKRPVCDSGETQIGYCRLGNTFYRLCCRQ.

3 disulfides stabilise this stretch: Cys-3/Cys-31, Cys-5/Cys-20, and Cys-10/Cys-30.

The protein belongs to the alpha-defensin family. HANP-2 could be a product of proteolytic N-terminal amino acid removal from HANP-4.

It localises to the secreted. Functionally, bactericidal activity, greater against Gram-positive bacteria. Low anti-fungi activity. The chain is Neutrophil defensin 4 from Mesocricetus auratus (Golden hamster).